The following is a 94-amino-acid chain: Co-chaperonin GroES (94 aa).

The protein belongs to the GroES chaperonin family. In terms of assembly, heptamer of 7 subunits arranged in a ring. Interacts with the chaperonin GroEL.

The protein resides in the cytoplasm. Its function is as follows. Together with the chaperonin GroEL, plays an essential role in assisting protein folding. The GroEL-GroES system forms a nano-cage that allows encapsulation of the non-native substrate proteins and provides a physical environment optimized to promote and accelerate protein folding. GroES binds to the apical surface of the GroEL ring, thereby capping the opening of the GroEL channel. The protein is Co-chaperonin GroES of Bacillus cereus (strain ATCC 14579 / DSM 31 / CCUG 7414 / JCM 2152 / NBRC 15305 / NCIMB 9373 / NCTC 2599 / NRRL B-3711).